Here is a 710-residue protein sequence, read N- to C-terminus: Solute carrier organic anion transporter family member 3A1 (710 aa).

N-acetylmethionine is present on M1. The span at 1–15 shows a compositional bias: gly residues; that stretch reads MQGKKPGGSSGGGRS. The segment at 1–25 is disordered; that stretch reads MQGKKPGGSSGGGRSGELQGDEAQR. The Cytoplasmic portion of the chain corresponds to 1-40; sequence MQGKKPGGSSGGGRSGELQGDEAQRNKKKKKKVSCFSNIK. Residues 41–60 traverse the membrane as a helical segment; the sequence is IFLVSECALMLAQGTVGAYL. The Extracellular segment spans residues 61–79; that stretch reads VSVLTTLERRFNLQSADVG. The chain crosses the membrane as a helical span at residues 80 to 100; sequence VIASSFEIGNLALILFVSYFG. Topologically, residues 101-106 are cytoplasmic; sequence ARGHRP. The chain crosses the membrane as a helical span at residues 107–131; it reads RLIGCGGIVMALGALLSALPEFLTH. The Extracellular segment spans residues 132-174; that stretch reads QYKYEAGEIRWGAEGRDVCATNGSSSDEGPDPDLICRNRTATN. N-linked (GlcNAc...) asparagine glycosylation is found at N153 and N169. The chain crosses the membrane as a helical span at residues 175–203; the sequence is MMYLLLIGAQVLLGIGATPVQPLGVSYID. Residues 204-222 lie on the Cytoplasmic side of the membrane; it reads DHVRRKDSSLYIGILFTML. The chain crosses the membrane as a helical span at residues 223–243; that stretch reads VFGPACGFILGSFCTKIYVDA. The Extracellular segment spans residues 244–261; it reads VFIDTSNLDITPDDPRWI. A helical membrane pass occupies residues 262–286; the sequence is GAWWGGFLLCGALLFFSSLLMFGFP. Residues 287–344 are Cytoplasmic-facing; sequence QSLPPHSEPGMESEQAMLPEREYERPKPSNGVLRHPLEPDSSASCFQQLRVIPKVTKH. The chain crosses the membrane as a helical span at residues 345–366; sequence LLSNPVFTCIVLAACMEIAVVA. Topologically, residues 367 to 386 are extracellular; sequence GFAAFLGKYLEQQFNLTTSS. Residue N381 is glycosylated (N-linked (GlcNAc...) asparagine). Residues 387–410 form a helical membrane-spanning segment; the sequence is ANQLLGMTAIPCACLGIFLGGLLV. Residues 411-414 are Cytoplasmic-facing; sequence KKLS. The chain crosses the membrane as a helical span at residues 415–438; that stretch reads LSALGAIRMAMLVNLVSTACYVSF. Over 439-539 the chain is Extracellular; it reads LFLGCDTVPV…PGCQEAFLTF (101 aa). N-linked (GlcNAc...) asparagine glycosylation occurs at N457. A Kazal-like domain is found at 465–513; it reads LDPYSPCNNNCECQTDSFTPVCGADGITYLSACFAGCNSTNLTGCACLT. 3 disulfide bridges follow: C471-C501, C477-C497, and C486-C511. N502, N505, and N519 each carry an N-linked (GlcNAc...) asparagine glycan. Residues 540-562 form a helical membrane-spanning segment; that stretch reads LCVMCVCSLIGAMAQTPSVIILI. Residues 563-571 are Cytoplasmic-facing; the sequence is RTVSPELKS. A helical transmembrane segment spans residues 572–597; it reads YALGVLFLLLRLLGFIPPPLIFGAGI. Residues 598–630 are Extracellular-facing; sequence DSTCLFWSTFCGEQGACVLYDNVVYRYLYVSIA. The chain crosses the membrane as a helical span at residues 631 to 648; it reads IALKSFAFILYTTTWQCL. Residues 649-705 are Cytoplasmic-facing; the sequence is RKNYKRYIKNHEGGLSTSEFLASTLTLDNLGRDPVPAHQTHRTKFIYNLEDHEWCEN.

This sequence belongs to the organo anion transporter (TC 2.A.60) family. As to expression, expressed in many brain regions, including frontal cortex, brain stem and cerebellum. Associated with neuronal bodies in a punctated matter. Detected at the arcuate nucleus and the choroid plexus (at protein level). Little expression, if any, in oligodendrocytes. In the cardiovascular system, detected in cardiac muscle cells and endothelial cells of aorta, coronary artery and left ventricular endocardium (at protein level). In the respiratory system, detected in alveolar epithelial cells and in mucosal epithelium of the trachea (at protein level). In the reproductive system, detected in spermatozoa, oocytes, smooth muscle cells of the ovary, epithelium of the glandula uterine, smooth muscle cells of the myometrium and epithelium of the endometrium (at protein level). In the kidney, detected in afferent and efferent arterioles, and the epithelium of distal tubules and collecting tubules (at protein level).

It is found in the basolateral cell membrane. Its subcellular location is the apical cell membrane. The protein resides in the basal cell membrane. It catalyses the reaction L-thyroxine(out) = L-thyroxine(in). The enzyme catalyses prostaglandin E1(out) = prostaglandin E1(in). The catalysed reaction is prostaglandin E2(out) = prostaglandin E2(in). It carries out the reaction prostaglandin F2alpha(out) = prostaglandin F2alpha(in). It catalyses the reaction (5Z,8Z,11Z,14Z)-eicosatetraenoate(out) = (5Z,8Z,11Z,14Z)-eicosatetraenoate(in). The enzyme catalyses taurocholate(out) = taurocholate(in). The catalysed reaction is glycocholate(out) = glycocholate(in). It carries out the reaction estrone 3-sulfate(out) = estrone 3-sulfate(in). It catalyses the reaction argipressin(out) = argipressin(in). Putative organic anion antiporter with apparent broad substrate specificity. Recognizes various substrates including thyroid hormone L-thyroxine, prostanoids such as prostaglandin E1 and E2, bile acids such as taurocholate, glycolate and glycochenodeoxycholate and peptide hormones such as L-arginine vasopressin, likely operating in a tissue-specific manner. The transport mechanism, its electrogenicity and potential tissue-specific counterions remain to be elucidated. This is Solute carrier organic anion transporter family member 3A1 (Slco3a1) from Rattus norvegicus (Rat).